A 159-amino-acid chain; its full sequence is 2-C-methyl-D-erythritol 2,4-cyclodiphosphate synthase (159 aa).

A divalent metal cation contacts are provided by Asp-8 and His-10. 4-CDP-2-C-methyl-D-erythritol 2-phosphate-binding positions include 8–10 and 34–35; these read DVH and HS. His-42 lines the a divalent metal cation pocket. Residues 56-58, 61-65, 100-106, 132-135, Phe-139, and Arg-142 each bind 4-CDP-2-C-methyl-D-erythritol 2-phosphate; these read DIG, FPDTD, AQAPKML, and TTTE.

The protein belongs to the IspF family. In terms of assembly, homotrimer. Requires a divalent metal cation as cofactor.

The enzyme catalyses 4-CDP-2-C-methyl-D-erythritol 2-phosphate = 2-C-methyl-D-erythritol 2,4-cyclic diphosphate + CMP. Its pathway is isoprenoid biosynthesis; isopentenyl diphosphate biosynthesis via DXP pathway; isopentenyl diphosphate from 1-deoxy-D-xylulose 5-phosphate: step 4/6. In terms of biological role, involved in the biosynthesis of isopentenyl diphosphate (IPP) and dimethylallyl diphosphate (DMAPP), two major building blocks of isoprenoid compounds. Catalyzes the conversion of 4-diphosphocytidyl-2-C-methyl-D-erythritol 2-phosphate (CDP-ME2P) to 2-C-methyl-D-erythritol 2,4-cyclodiphosphate (ME-CPP) with a corresponding release of cytidine 5-monophosphate (CMP). The chain is 2-C-methyl-D-erythritol 2,4-cyclodiphosphate synthase from Klebsiella pneumoniae (strain 342).